A 91-amino-acid polypeptide reads, in one-letter code: Small ribosomal subunit protein bS18 (91 aa).

Belongs to the bacterial ribosomal protein bS18 family. In terms of assembly, part of the 30S ribosomal subunit. Forms a tight heterodimer with protein bS6.

Binds as a heterodimer with protein bS6 to the central domain of the 16S rRNA, where it helps stabilize the platform of the 30S subunit. In Paraburkholderia phytofirmans (strain DSM 17436 / LMG 22146 / PsJN) (Burkholderia phytofirmans), this protein is Small ribosomal subunit protein bS18.